Reading from the N-terminus, the 727-residue chain is Epithelial splicing regulatory protein 2 (727 aa).

Positions 1–22 are disordered; sequence MTPPPPPPPPPGPDPAADPAAD. Phosphoserine is present on serine 83. RRM domains are found at residues 257-353, 358-438, and 475-555; these read TVVR…RFLS, VILR…RSTA, and DCVR…PCST. Serine 573 is subject to Phosphoserine.

The protein belongs to the ESRP family. As to quaternary structure, interacts with RBPMS. Epithelial cell-specific.

It is found in the nucleus. MRNA splicing factor that regulates the formation of epithelial cell-specific isoforms. Specifically regulates the expression of FGFR2-IIIb, an epithelial cell-specific isoform of FGFR2. Also regulates the splicing of CD44, CTNND1, ENAH, 3 transcripts that undergo changes in splicing during the epithelial-to-mesenchymal transition (EMT). Acts by directly binding specific sequences in mRNAs. Binds the GU-rich sequence motifs in the ISE/ISS-3, a cis-element regulatory region present in the mRNA of FGFR2. The chain is Epithelial splicing regulatory protein 2 (ESRP2) from Homo sapiens (Human).